Reading from the N-terminus, the 350-residue chain is Methionine import ATP-binding protein MetN (350 aa).

The ABC transporter domain maps to 2–241 (IQIKNLKKEY…PQAPVTRSFV (240 aa)). ATP is bound at residue 38–45 (GHSGAGKS).

It belongs to the ABC transporter superfamily. Methionine importer (TC 3.A.1.24) family. As to quaternary structure, the complex is composed of two ATP-binding proteins (MetN), two transmembrane proteins (MetI) and a solute-binding protein (MetQ).

Its subcellular location is the cell inner membrane. The enzyme catalyses L-methionine(out) + ATP + H2O = L-methionine(in) + ADP + phosphate + H(+). It catalyses the reaction D-methionine(out) + ATP + H2O = D-methionine(in) + ADP + phosphate + H(+). Its function is as follows. Part of the ABC transporter complex MetNIQ involved in methionine import. Responsible for energy coupling to the transport system. In Francisella tularensis subsp. holarctica (strain LVS), this protein is Methionine import ATP-binding protein MetN.